Consider the following 65-residue polypeptide: Small ribosomal subunit protein eS27 (65 aa).

Residues C21, C24, C40, and C43 each coordinate Zn(2+). Residues 21–43 (CKDCGNVQVVFARPSSVVTCNIC) form a C4-type zinc finger.

The protein belongs to the eukaryotic ribosomal protein eS27 family. In terms of assembly, part of the 30S ribosomal subunit. Requires Zn(2+) as cofactor.

In Thermoplasma volcanium (strain ATCC 51530 / DSM 4299 / JCM 9571 / NBRC 15438 / GSS1), this protein is Small ribosomal subunit protein eS27.